Consider the following 325-residue polypeptide: Serpentine receptor class gamma-16 (325 aa).

Helical transmembrane passes span 25–45, 65–85, 87–107, 144–164, 187–207, 232–252, and 264–284; these read FCLY…ILLI, VVSL…MFIP, LCPL…MYYW, LAVT…WNLL, WASL…FTII, FVSL…LIFV, and LLFQ…IIML.

Belongs to the nematode receptor-like protein srg family.

Its subcellular location is the membrane. The protein is Serpentine receptor class gamma-16 (srg-16) of Caenorhabditis elegans.